A 308-amino-acid polypeptide reads, in one-letter code: MRALVLLLSLFLLGGQAQHVSDWTYSEGALDEAHWPQHYPACGGQRQSPINLQRTKVRYNPSLKGLNMTGYETQAGEFPMVNNGHTVQISLPSTMRMTVADGTVYIAQQMHFHWGGASSEISGSEHTVDGIRHVIEIHIVHYNSKYKSYDIAQDAPDGLAVLAAFVEVKNYPENTYYSNFISHLANIKYPGQRTTLTGLDVQDMLPRNLQHYYTYHGSLTTPPCTENVHWFVLADFVKLSRTQVWKLENSLLDHRNKTIHNDYRRTQPLNHRVVESNFPNQEYTLGSEFQFYLHKIEEILDYLRRALN.

A signal peptide spans M1–A17. Positions S21–F278 constitute an Alpha-carbonic anhydrase domain. An intrachain disulfide couples C42 to C224. N-linked (GlcNAc...) asparagine glycosylation occurs at N67. H85 (proton donor/acceptor) is an active-site residue. 3 residues coordinate Zn(2+): H111, H113, and H138. Residue T220–T221 coordinates substrate. An N-linked (GlcNAc...) asparagine glycan is attached at N256.

Belongs to the alpha-carbonic anhydrase family. Zn(2+) is required as a cofactor. As to expression, major constituent of saliva.

Its subcellular location is the secreted. It catalyses the reaction hydrogencarbonate + H(+) = CO2 + H2O. With respect to regulation, inhibited by coumarins, sulfonamide derivatives such as acetazolamide (AZA), saccharin and Foscarnet (phosphonoformate trisodium salt). Its function is as follows. Reversible hydration of carbon dioxide. Its role in saliva is unknown. The polypeptide is Carbonic anhydrase 6 (CA6) (Homo sapiens (Human)).